Consider the following 63-residue polypeptide: Cecropin-B (63 aa).

A signal peptide spans 1–22 (MNFNKIFVFVALILAISLGNTE). Arg-62 is subject to Arginine amide.

It belongs to the cecropin family.

The protein resides in the secreted. In terms of biological role, cecropins have lytic and antibacterial activity against several Gram-positive and Gram-negative bacteria. The polypeptide is Cecropin-B (CecB) (Drosophila simulans (Fruit fly)).